Reading from the N-terminus, the 380-residue chain is MSSKRSIFEEVSDGARAAAAQPGMIDRGRGGARGAIRAWLAVLFALVVAMIVVGGLTRLTDSGLSITEWRPVTGAIPPLSEADWQAEFDKYKQIDQWRLQNQWMELADFKSIYWWEWGHRQLGRVIGLVWALGFFGFLLARKIPAGWTGRLILPGVLGGVQGAVGAWMVASGITQGEGMTSVASYRLATHLGLAFVILGLLAWSILQLGRSERDLMQARRTKEARLFGLATGWLHLAFLQILIGALVAGLDAGRNYVDWPLMAGQVIPPDPLELSPLWRNFFENPGLVQFIHRIVGYLLLAYGVMVWLRGRRSAHAQTRFAFNAGFAALSLQVVLGIVTVLYAAPWQIAILHQLLAVGVFVLILRARFLCAYPIATSIRG.

The next 8 membrane-spanning stretches (helical) occupy residues 36 to 56, 125 to 145, 151 to 171, 187 to 207, 227 to 247, 287 to 307, 320 to 340, and 344 to 364; these read IRAW…VGGL, VIGL…KIPA, LILP…MVAS, LATH…SILQ, FGLA…GALV, LVQF…VMVW, FAFN…IVTV, and APWQ…VLIL. A heme-binding site is contributed by His-292. His-352 lines the heme pocket.

This sequence belongs to the COX15/CtaA family. Type 2 subfamily. In terms of assembly, interacts with CtaB. It depends on heme b as a cofactor.

Its subcellular location is the cell membrane. It carries out the reaction Fe(II)-heme o + 2 A + H2O = Fe(II)-heme a + 2 AH2. Its pathway is porphyrin-containing compound metabolism; heme A biosynthesis; heme A from heme O: step 1/1. In terms of biological role, catalyzes the conversion of heme O to heme A by two successive hydroxylations of the methyl group at C8. The first hydroxylation forms heme I, the second hydroxylation results in an unstable dihydroxymethyl group, which spontaneously dehydrates, resulting in the formyl group of heme A. This Ruegeria pomeroyi (strain ATCC 700808 / DSM 15171 / DSS-3) (Silicibacter pomeroyi) protein is Heme A synthase.